The primary structure comprises 480 residues: Reticulophagy regulator 1 (480 aa).

The segment covering methionine 1–alanine 10 has biased composition (basic and acidic residues). The disordered stretch occupies residues methionine 1–glutamate 41. The Cytoplasmic portion of the chain corresponds to methionine 1–alanine 43. The helical transmembrane segment at alanine 44 to tryptophan 64 threads the bilayer. The Lumenal segment spans residues arginine 65–serine 78. The interval aspartate 67 to phenylalanine 216 is reticulon homology domain. The chain crosses the membrane as a helical span at residues leucine 79–valine 99. The Cytoplasmic segment spans residues tyrosine 100–histidine 101. Residues leucine 102–serine 122 traverse the membrane as a helical segment. The Lumenal portion of the chain corresponds to arginine 123–threonine 191. At serine 132 the chain carries Phosphoserine. Serine 134 carries the phosphoserine; by CAMK2B modification. The residue at position 136 (serine 136) is a Phosphoserine. A helical membrane pass occupies residues isoleucine 192–leucine 212. Topologically, residues cysteine 213–histidine 480 are cytoplasmic. Positions phenylalanine 302 to aspartate 313 are enriched in polar residues. The interval phenylalanine 302–leucine 348 is disordered. Positions aspartate 317 to serine 331 are enriched in basic and acidic residues. Positions aspartate 436 to leucine 441 match the LIR motif motif. The segment at glutamate 450–histidine 480 is disordered. Over residues glycine 454–leucine 473 the composition is skewed to polar residues.

It belongs to the RETREG family. As to quaternary structure, homooligomer; oligomerization is enhanced following endoplasmic reticulum stress and is mediated by the reticulon homology domain. Interacts with ATG8 family modifier proteins MAP1LC3A, MAP1LC3B, GABARAP, GABARAPL1 and GABARAPL2. Post-translationally, phosphorylation at Ser-134 by CAMK2B enhances oligomerization and membrane scission and reticulophagy activity.

Its subcellular location is the golgi apparatus. It localises to the cis-Golgi network membrane. The protein localises to the endoplasmic reticulum membrane. Endoplasmic reticulum (ER)-anchored autophagy regulator which mediates ER delivery into lysosomes through sequestration into autophagosomes. Promotes membrane remodeling and ER scission via its membrane bending capacity and targets the fragments into autophagosomes via interaction with ATG8 family proteins. Active under basal conditions. Required for collagen quality control in a LIR motif-dependent manner. Required for long-term survival of nociceptive and autonomic ganglion neurons. The sequence is that of Reticulophagy regulator 1 from Rattus norvegicus (Rat).